The sequence spans 325 residues: D-alanine--D-alanine ligase (325 aa).

Residues 121 to 316 (KYVFEGCGLP…FEELVVRILR (196 aa)) enclose the ATP-grasp domain. 147-202 (VAALGTPLSVKPAHEGSSIGIRKVNSAAELAEAYEAAARLDDLVLVEQWIEGPEFT) provides a ligand contact to ATP. Mg(2+) is bound by residues D270, E283, and N285.

This sequence belongs to the D-alanine--D-alanine ligase family. Mg(2+) serves as cofactor. The cofactor is Mn(2+).

Its subcellular location is the cytoplasm. It carries out the reaction 2 D-alanine + ATP = D-alanyl-D-alanine + ADP + phosphate + H(+). The protein operates within cell wall biogenesis; peptidoglycan biosynthesis. Its function is as follows. Cell wall formation. This chain is D-alanine--D-alanine ligase, found in Marinobacter nauticus (strain ATCC 700491 / DSM 11845 / VT8) (Marinobacter aquaeolei).